We begin with the raw amino-acid sequence, 156 residues long: Putative pre-16S rRNA nuclease (156 aa).

Belongs to the YqgF nuclease family.

The protein resides in the cytoplasm. In terms of biological role, could be a nuclease involved in processing of the 5'-end of pre-16S rRNA. This Aromatoleum aromaticum (strain DSM 19018 / LMG 30748 / EbN1) (Azoarcus sp. (strain EbN1)) protein is Putative pre-16S rRNA nuclease.